A 196-amino-acid chain; its full sequence is Large ribosomal subunit protein eL15 (196 aa).

The segment at 155–196 (THRGRAERGLTSAGKKGRGQRRKGKGTEKNYPSVQAHDRRGK) is disordered. Basic residues predominate over residues 169–178 (KKGRGQRRKG).

This sequence belongs to the eukaryotic ribosomal protein eL15 family.

The protein is Large ribosomal subunit protein eL15 of Methanocella arvoryzae (strain DSM 22066 / NBRC 105507 / MRE50).